The chain runs to 601 residues: Methionine--tRNA ligase (601 aa).

The 'HIGH' region motif lies at 21-31 (PYANGPRHIGH). Zn(2+)-binding residues include Cys153, Cys156, Cys166, and Cys169. Residue Asn361 coordinates ATP.

The protein belongs to the class-I aminoacyl-tRNA synthetase family. MetG type 1 subfamily. As to quaternary structure, monomer. Zn(2+) serves as cofactor.

It is found in the cytoplasm. The catalysed reaction is tRNA(Met) + L-methionine + ATP = L-methionyl-tRNA(Met) + AMP + diphosphate. In terms of biological role, is required not only for elongation of protein synthesis but also for the initiation of all mRNA translation through initiator tRNA(fMet) aminoacylation. The polypeptide is Methionine--tRNA ligase (Cutibacterium acnes (strain DSM 16379 / KPA171202) (Propionibacterium acnes)).